Reading from the N-terminus, the 188-residue chain is Cell division protein SepF (188 aa).

A disordered region spans residues 29 to 53 (EQQDQDQRATQADGGALATLGDSNP).

The protein belongs to the SepF family. As to quaternary structure, homodimer. Interacts with FtsZ.

Its subcellular location is the cytoplasm. Functionally, cell division protein that is part of the divisome complex and is recruited early to the Z-ring. Probably stimulates Z-ring formation, perhaps through the cross-linking of FtsZ protofilaments. Its function overlaps with FtsA. The sequence is that of Cell division protein SepF from Synechococcus sp. (strain CC9902).